Here is a 416-residue protein sequence, read N- to C-terminus: Tyrosine--tRNA ligase (416 aa).

Tyr39 serves as a coordination point for L-tyrosine. Positions 44-53 (CTAPSLHAGH) match the 'HIGH' region motif. Positions 176 and 180 each coordinate L-tyrosine. The 'KMSKS' region signature appears at 236 to 240 (KMGKT). Position 239 (Lys239) interacts with ATP. Residues 349 to 414 (ISLVDLLHDT…AGKKRHIKVV (66 aa)) enclose the S4 RNA-binding domain.

It belongs to the class-I aminoacyl-tRNA synthetase family. TyrS type 1 subfamily. Homodimer.

The protein resides in the cytoplasm. The enzyme catalyses tRNA(Tyr) + L-tyrosine + ATP = L-tyrosyl-tRNA(Tyr) + AMP + diphosphate + H(+). Functionally, catalyzes the attachment of tyrosine to tRNA(Tyr) in a two-step reaction: tyrosine is first activated by ATP to form Tyr-AMP and then transferred to the acceptor end of tRNA(Tyr). This Wolbachia pipientis wMel protein is Tyrosine--tRNA ligase.